The primary structure comprises 82 residues: DNA-directed RNA polymerase subunit Rpo5 (82 aa).

Belongs to the archaeal Rpo5/eukaryotic RPB5 RNA polymerase subunit family. As to quaternary structure, part of the RNA polymerase complex.

The protein resides in the cytoplasm. It catalyses the reaction RNA(n) + a ribonucleoside 5'-triphosphate = RNA(n+1) + diphosphate. Its function is as follows. DNA-dependent RNA polymerase (RNAP) catalyzes the transcription of DNA into RNA using the four ribonucleoside triphosphates as substrates. The polypeptide is DNA-directed RNA polymerase subunit Rpo5 (Thermococcus onnurineus (strain NA1)).